Consider the following 111-residue polypeptide: uncharacterized protein (111 aa).

A disordered region spans residues 66–94 (PVPTATPSLPRSGFTSSAKKIKESRKQKS). A compositionally biased stretch (polar residues) spans 70–83 (ATPSLPRSGFTSSA).

Its subcellular location is the plastid. It is found in the chloroplast. This is an uncharacterized protein from Chlamydomonas reinhardtii (Chlamydomonas smithii).